A 179-amino-acid polypeptide reads, in one-letter code: Orotate phosphoribosyltransferase (179 aa).

Residues Arg94, Lys95, Lys98, His100, and 120 to 128 (EDTSTTGNS) contribute to the 5-phospho-alpha-D-ribose 1-diphosphate site. Thr124 and Arg152 together coordinate orotate.

This sequence belongs to the purine/pyrimidine phosphoribosyltransferase family. PyrE subfamily. As to quaternary structure, homodimer. Mg(2+) is required as a cofactor.

The enzyme catalyses orotidine 5'-phosphate + diphosphate = orotate + 5-phospho-alpha-D-ribose 1-diphosphate. It functions in the pathway pyrimidine metabolism; UMP biosynthesis via de novo pathway; UMP from orotate: step 1/2. Catalyzes the transfer of a ribosyl phosphate group from 5-phosphoribose 1-diphosphate to orotate, leading to the formation of orotidine monophosphate (OMP). The chain is Orotate phosphoribosyltransferase from Mycobacterium avium (strain 104).